The following is a 1125-amino-acid chain: Telomerase reverse transcriptase (1125 aa).

The RNA-interacting domain 1 stretch occupies residues 1–234 (MPRAPRCRAV…ARRRRSSARG (234 aa)). Residues 58-199 (VPWDAQPPPA…RQVGGTRAGF (142 aa)) are GQ motif. A required for regulating specificity for telomeric DNA and for processivity for primer elongation region spans residues 137–141 (WGLLL). Residues 186 to 308 (RRPTRQVGGT…WRLSPSEGEP (123 aa)) form a disordered region. Residues 224-243 (GARRRRSSARGRLPPAKRPR) show a composition bias toward basic residues. Residues 226–244 (RRRRSSARGRLPPAKRPRR) carry the Bipartite nuclear localization signal motif. S231 is modified (phosphoserine; by PKB/AKT1). The linker stretch occupies residues 235-312 (RLPPAKRPRR…PSEGEPGAGA (78 aa)). Composition is skewed to basic and acidic residues over residues 244–253 (RGLEPGRDLE) and 269–279 (DAAEAKSRKGD). A required for oligomerization region spans residues 290–531 (GERGVGSASW…VPAAEHRQRE (242 aa)). The interval 313 to 543 (CAETKRFLYC…LGRFLHWLMG (231 aa)) is RNA-interacting domain 2. A TFLY; involved in RNA binding motif is present at residues 316–321 (TKRFLY). Residues 364–514 (PRRPRRLPAR…MKVQDCAWLR (151 aa)) form a QFP motif region. Positions 385–405 (LGNHARSPYGALLRAHCPLPA) are CP motif. S450 carries the post-translational modification Phosphoserine; by DYRK2. Positions 598–928 (EVRQHQEARP…CLFPWCGLLL (331 aa)) constitute a Reverse transcriptase domain. Y700 carries the post-translational modification Phosphotyrosine; by SRC-type Tyr-kinases. Mg(2+)-binding residues include D705, D861, and D862. The segment at 907 to 921 (LGGAAPLQLPAHCLF) is required for oligomerization. Residues 923-927 (WCGLL) are primer grip sequence. Positions 929–1125 (DTRTLEVHGD…LTADFKTILD (197 aa)) are CTE.

It belongs to the reverse transcriptase family. Telomerase subfamily. In terms of assembly, catalytic component of the telomerase holoenzyme complex composed of one molecule of TERT, one molecule of WRAP53/TCAB1, two molecules of H/ACA ribonucleoprotein complex subunits DKC1, NOP10, NHP2 and GAR1, and a telomerase RNA template component (TERC). The telomerase holoenzyme complex is associated with TEP1, SMG6/EST1A and POT1. The molecular chaperone HSP90/P23 complex is required for correct assembly and stabilization of the active telomerase. Interacts directly with HSP90A and PTGES3. Interacts with HSPA1A; the interaction occurs in the absence of TERC and dissociates once the complex has formed. Interacts with RAN; the interaction promotes nuclear export of TERT. Interacts with XPO1. Interacts with PTPN11; the interaction retains TERT in the nucleus. Interacts with NCL (via RRM1 and C-terminal RRM4/Arg/Gly-rich domains); the interaction is important for nucleolar localization of TERT. Interacts with SMARCA4 (via the bromodomain); the interaction regulates Wnt-mediated signaling. Interacts with MCRS1 (isoform MCRS2); the interaction inhibits in vitro telomerase activity. Interacts with PIF1; the interaction has no effect on the elongation activity of TERT. Interacts with PML; the interaction recruits TERT to PML bodies and inhibits telomerase activity. Interacts with GNL3L. Interacts with isoform 1 and isoform 2 of NVL. Interacts with DHX36. Interacts with ATF7. Post-translationally, phosphorylation at Tyr-700 under oxidative stress leads to translocation of TERT to the cytoplasm and reduces its antiapoptotic activity. Dephosphorylated by SHP2/PTPN11 leading to nuclear retention. Phosphorylation at Ser-231 by the AKT pathway promotes nuclear location. Phosphorylation at the G2/M phase at Ser-450 by DYRK2 promotes ubiquitination by the EDVP complex and degradation. Ubiquitinated by the EDVP complex, a E3 ligase complex following phosphorylation at Ser-450 by DYRK2. Ubiquitinated leads to proteasomal degradation.

The protein localises to the nucleus. The protein resides in the nucleolus. It localises to the nucleoplasm. Its subcellular location is the chromosome. It is found in the telomere. The protein localises to the cytoplasm. The protein resides in the PML body. The catalysed reaction is DNA(n) + a 2'-deoxyribonucleoside 5'-triphosphate = DNA(n+1) + diphosphate. Functionally, telomerase is a ribonucleoprotein enzyme essential for the replication of chromosome termini in most eukaryotes. Active in progenitor and cancer cells. Inactive, or very low activity, in normal somatic cells. Catalytic component of the teleromerase holoenzyme complex whose main activity is the elongation of telomeres by acting as a reverse transcriptase that adds simple sequence repeats to chromosome ends by copying a template sequence within the RNA component of the enzyme. Catalyzes the RNA-dependent extension of 3'-chromosomal termini with the 6-nucleotide telomeric repeat unit, 5'-TTAGGG-3'. The catalytic cycle involves primer binding, primer extension and release of product once the template boundary has been reached or nascent product translocation followed by further extension. More active on substrates containing 2 or 3 telomeric repeats. Telomerase activity is regulated by a number of factors including telomerase complex-associated proteins, chaperones and polypeptide modifiers. Modulates Wnt signaling. Plays important roles in aging and antiapoptosis. The protein is Telomerase reverse transcriptase (TERT) of Bos taurus (Bovine).